The primary structure comprises 294 residues: Acetylglutamate kinase (294 aa).

Residues 63-64 (GG), arginine 85, and asparagine 188 each bind substrate.

It belongs to the acetylglutamate kinase family. ArgB subfamily.

It is found in the cytoplasm. It catalyses the reaction N-acetyl-L-glutamate + ATP = N-acetyl-L-glutamyl 5-phosphate + ADP. The protein operates within amino-acid biosynthesis; L-arginine biosynthesis; N(2)-acetyl-L-ornithine from L-glutamate: step 2/4. Its function is as follows. Catalyzes the ATP-dependent phosphorylation of N-acetyl-L-glutamate. In Methanococcus vannielii (strain ATCC 35089 / DSM 1224 / JCM 13029 / OCM 148 / SB), this protein is Acetylglutamate kinase.